The following is a 254-amino-acid chain: 4-hydroxy-tetrahydrodipicolinate reductase (254 aa).

Residue 13 to 18 (GAAGRM) participates in NAD(+) binding. R39 is a binding site for NADP(+). NAD(+) is bound by residues 86–88 (GTT) and 110–113 (AANT). Catalysis depends on H143, which acts as the Proton donor/acceptor. H144 contacts (S)-2,3,4,5-tetrahydrodipicolinate. K147 functions as the Proton donor in the catalytic mechanism. 153–154 (GT) lines the (S)-2,3,4,5-tetrahydrodipicolinate pocket.

The protein belongs to the DapB family.

It localises to the cytoplasm. The enzyme catalyses (S)-2,3,4,5-tetrahydrodipicolinate + NAD(+) + H2O = (2S,4S)-4-hydroxy-2,3,4,5-tetrahydrodipicolinate + NADH + H(+). The catalysed reaction is (S)-2,3,4,5-tetrahydrodipicolinate + NADP(+) + H2O = (2S,4S)-4-hydroxy-2,3,4,5-tetrahydrodipicolinate + NADPH + H(+). The protein operates within amino-acid biosynthesis; L-lysine biosynthesis via DAP pathway; (S)-tetrahydrodipicolinate from L-aspartate: step 4/4. Catalyzes the conversion of 4-hydroxy-tetrahydrodipicolinate (HTPA) to tetrahydrodipicolinate. The sequence is that of 4-hydroxy-tetrahydrodipicolinate reductase from Zymomonas mobilis subsp. mobilis (strain ATCC 31821 / ZM4 / CP4).